A 954-amino-acid polypeptide reads, in one-letter code: DNA repair and telomere maintenance protein NBS1 (954 aa).

The FHA domain maps to 22 to 85; sequence YLFGRTVAEA…KGTLVNGVQI (64 aa). BRCT domains lie at 107-186 and 244-349; these read TLKI…NAIV and GYTF…LEAI. The span at 368–377 shows a compositional bias: polar residues; the sequence is VSVSASVEPQ. Disordered regions lie at residues 368–431, 444–506, 528–580, 630–654, and 692–954; these read VSVS…FKGF, QAQS…PLPE, IEAG…KQED, VRQP…WDPR, and GIGD…GRRR. A compositionally biased stretch (basic and acidic residues) spans 378 to 393; sequence SSEKVRPAVEDRKEVE. Basic residues predominate over residues 416 to 428; sequence PHRRERRTGRSRF. Residues 458–471 show a composition bias toward polar residues; that stretch reads PSASQDSLFVSQRE. A compositionally biased stretch (acidic residues) spans 541–554; the sequence is PEPEREDEDVEMVE. Basic and acidic residues-rich tracts occupy residues 640 to 654 and 704 to 715; these read RTRE…WDPR and GRVPRRPKETQT. The span at 726 to 737 shows a compositional bias: low complexity; the sequence is DGSGFAAAAASG. The segment covering 738 to 751 has biased composition (basic and acidic residues); sequence KGKEKDKENEKEVG. Composition is skewed to low complexity over residues 801 to 815 and 826 to 842; these read EVVS…ASEP and RANA…SQTQ. A compositionally biased stretch (acidic residues) spans 936–945; it reads GSEEESEDDE.

Belongs to the Nibrin family. In terms of assembly, component of the MRN complex composed of two heterodimers RAD50 and MRE11 associated with a single NBS1.

It is found in the nucleus. Its subcellular location is the chromosome. Component of the MRN complex, which plays a central role in double-strand break (DSB) repair, DNA recombination, maintenance of telomere integrity and meiosis. The MRN complex is involved in the repair of DNA double-strand breaks (DSBs) via homologous recombination (HR), an error-free mechanism which primarily occurs during S and G2 phases. The complex (1) mediates the end resection of damaged DNA, which generates proper single-stranded DNA, a key initial steps in HR, and is (2) required for the recruitment of other repair factors and efficient activation of ATM and ATR upon DNA damage. The MRN complex possesses single-strand endonuclease activity and double-strand-specific 3'-5' exonuclease activity, which are provided by MRE11, to initiate end resection, which is required for single-strand invasion and recombination. Within the MRN complex, NBS1 acts as a protein-protein adapter, which specifically recognizes and binds phosphorylated proteins, promoting their recruitment to DNA damage sites. Recruits MRE11 and RAD50 components of the MRN complex to DSBs in response to DNA damage. This chain is DNA repair and telomere maintenance protein NBS1, found in Chaetomium thermophilum (strain DSM 1495 / CBS 144.50 / IMI 039719) (Thermochaetoides thermophila).